Reading from the N-terminus, the 1024-residue chain is Eukaryotic translation initiation factor 3 subunit A (1024 aa).

The PCI domain maps to 331–508 (VISSNAPGTG…QAITFQDDVF (178 aa)). Coiled-coil stretches lie at residues 575–717 (AAED…REEA) and 777–889 (KRRG…RRSR). Composition is skewed to basic and acidic residues over residues 797-866 (KERR…ERRA) and 873-886 (DKQR…EANR). Disordered regions lie at residues 797-973 (KERR…GAYR) and 1001-1024 (AAAA…GRRA). Composition is skewed to low complexity over residues 890 to 906 (AAGT…AADA) and 946 to 971 (KEAA…SSGA).

It belongs to the eIF-3 subunit A family. In terms of assembly, component of the eukaryotic translation initiation factor 3 (eIF-3) complex.

It localises to the cytoplasm. Its function is as follows. RNA-binding component of the eukaryotic translation initiation factor 3 (eIF-3) complex, which is involved in protein synthesis of a specialized repertoire of mRNAs and, together with other initiation factors, stimulates binding of mRNA and methionyl-tRNAi to the 40S ribosome. The eIF-3 complex specifically targets and initiates translation of a subset of mRNAs involved in cell proliferation. The protein is Eukaryotic translation initiation factor 3 subunit A of Mycosarcoma maydis (Corn smut fungus).